The sequence spans 399 residues: F420-dependent formate dehydrogenase subunit beta (399 aa).

2 4Fe-4S ferredoxin-type domains span residues Thr287–Pro307 and Glu339–Ile367. [4Fe-4S] cluster is bound by residues Cys296, Cys299, Cys302, Cys306, Cys348, Cys351, Cys354, and Cys358.

The protein belongs to the FrhB family. Dimer of an alpha (FdhA) and a beta (FdhB) subunit. It depends on [4Fe-4S] cluster as a cofactor. The cofactor is FAD. Zn(2+) is required as a cofactor.

The catalysed reaction is oxidized coenzyme F420-(gamma-L-Glu)(n) + formate + 2 H(+) = reduced coenzyme F420-(gamma-L-Glu)(n) + CO2. With respect to regulation, is extremely sensitive to oxygen. Contains a FAD that is required for coenzyme F420-dependent activity but not for methyl viologen-dependent activity. Preincubation of the FAD-depleted enzyme with FAD restores coenzyme F420-dependent activity. Neither FMN nor FADH2 can replace FAD. Strongly inhibited by cyanide, azide, alpha,alpha-dipyridyl and 1,10-phenanthroline. Functionally, catalyzes the oxidation of formate to carbon dioxide, with coenzyme F420 as the electron acceptor. In vitro can also use methyl viologen, 7,8-didemethyl-8-hydroxy-5-deazariboflavin (or FO, a hydrolytic derivative of coenzyme F420), FMN and FAD as electron acceptors, but not NAD(+) or NADP(+). This chain is F420-dependent formate dehydrogenase subunit beta, found in Methanobacterium formicicum.